The primary structure comprises 670 residues: Putative segment polarity protein dishevelled homolog DVL1P1 (670 aa).

Residues 1 to 85 (MAETKIIYHM…RVVSWLVLVE (85 aa)) form the DIX domain. The disordered stretch occupies residues 89–240 (SDAGSQGTDS…ADRASSFSSM (152 aa)). A compositionally biased stretch (basic residues) spans 142-151 (SHRRDRARRR). Residues 152 to 171 (NREEAARTNGHPRGDRRRDV) are compositionally biased toward basic and acidic residues. Low complexity-rich tracts occupy residues 176 to 192 (DSASTALSSELESSSFV) and 201 to 214 (SRLSSSTEQSTSSR). Over residues 215–228 (LIRKHKRRRRKQRL) the composition is skewed to basic residues. The region spanning 251–323 (TVTLNMERHH…NDDAVRVLRE (73 aa)) is the PDZ domain. The DEP domain maps to 400–474 (PDSGLEIRDR…SEQCYYVFGD (75 aa)). The interval 518 to 642 (PGPPPCFPPA…PGGPPVRELA (125 aa)) is disordered. Low complexity-rich tracts occupy residues 526–553 (PAYQDPGFSYGSGSTGSQQSEGSKSSGS) and 600–614 (SRGSSPRSQASSYAP).

This sequence belongs to the DSH family. Expressed in thymus, heart, liver, kidney, brain, skeletal muscle, and pancreas.

It localises to the cytoplasm. Its function is as follows. May play a role in the signal transduction pathway mediated by multiple Wnt genes. The sequence is that of Putative segment polarity protein dishevelled homolog DVL1P1 (DVL1P1) from Homo sapiens (Human).